The chain runs to 754 residues: 5-methyltetrahydropteroyltriglutamate--homocysteine methyltransferase (754 aa).

5-methyltetrahydropteroyltri-L-glutamate-binding positions include 17 to 20 and K117; that span reads RELK. L-homocysteine is bound by residues 431–433 and E484; that span reads IGS. Residues 431–433 and E484 contribute to the L-methionine site; that span reads IGS. 5-methyltetrahydropteroyltri-L-glutamate contacts are provided by residues 515–516 and W561; that span reads RC. D599 contacts L-homocysteine. D599 contributes to the L-methionine binding site. E605 is a 5-methyltetrahydropteroyltri-L-glutamate binding site. Zn(2+) is bound by residues H641, C643, and E665. The Proton donor role is filled by H694. Position 726 (C726) interacts with Zn(2+).

The protein belongs to the vitamin-B12 independent methionine synthase family. Zn(2+) serves as cofactor.

The catalysed reaction is 5-methyltetrahydropteroyltri-L-glutamate + L-homocysteine = tetrahydropteroyltri-L-glutamate + L-methionine. It participates in amino-acid biosynthesis; L-methionine biosynthesis via de novo pathway; L-methionine from L-homocysteine (MetE route): step 1/1. Its function is as follows. Catalyzes the transfer of a methyl group from 5-methyltetrahydrofolate to homocysteine resulting in methionine formation. The polypeptide is 5-methyltetrahydropteroyltriglutamate--homocysteine methyltransferase (Pectobacterium atrosepticum (strain SCRI 1043 / ATCC BAA-672) (Erwinia carotovora subsp. atroseptica)).